Reading from the N-terminus, the 123-residue chain is Small ribosomal subunit protein uS12c (123 aa).

Belongs to the universal ribosomal protein uS12 family. In terms of assembly, part of the 30S ribosomal subunit.

The protein localises to the plastid. Its subcellular location is the chloroplast. With S4 and S5 plays an important role in translational accuracy. Located at the interface of the 30S and 50S subunits. The polypeptide is Small ribosomal subunit protein uS12c (rps12) (Chara vulgaris (Common stonewort)).